Reading from the N-terminus, the 246-residue chain is Adenylate kinase 4 (246 aa).

The residue at position 2 (alanine 2) is an N-acetylalanine. 43-48 (GSGKGT) lines the ATP pocket. Residues 63 to 92 (STGDMLRAAVASKTPLGVKAKEAMEKGELV) form an NMP region. Residues threonine 64, arginine 69, 90–92 (ELV), 118–121 (GFPR), and glutamine 125 contribute to the AMP site. Residues 159 to 196 (GRWIHPSSGRSYHTKFAPPKTPGVDDITGEPLIQRKDD) form an LID region. Residue arginine 160 participates in ATP binding. The AMP site is built by arginine 193 and arginine 204.

This sequence belongs to the adenylate kinase family. Monomer.

It localises to the cytoplasm. The catalysed reaction is AMP + ATP = 2 ADP. Its function is as follows. Catalyzes the reversible transfer of the terminal phosphate group between ATP and AMP. Plays an important role in cellular energy homeostasis and in adenine nucleotide metabolism. This chain is Adenylate kinase 4 (ADK1), found in Arabidopsis thaliana (Mouse-ear cress).